The primary structure comprises 192 residues: Probable GTP-binding protein EngB (192 aa).

Positions 22–192 (GRPEIVFVGR…LLERLDLFSQ (171 aa)) constitute an EngB-type G domain. Residues 30–37 (GRSNVGKS), 57–61 (GKTRL), 75–78 (DLPG), 142–145 (TKWD), and 172–174 (YSS) contribute to the GTP site. Mg(2+)-binding residues include S37 and T59.

Belongs to the TRAFAC class TrmE-Era-EngA-EngB-Septin-like GTPase superfamily. EngB GTPase family. Mg(2+) is required as a cofactor.

Its function is as follows. Necessary for normal cell division and for the maintenance of normal septation. This Chlorobaculum parvum (strain DSM 263 / NCIMB 8327) (Chlorobium vibrioforme subsp. thiosulfatophilum) protein is Probable GTP-binding protein EngB.